A 389-amino-acid chain; its full sequence is S-adenosylmethionine synthase (389 aa).

Residue histidine 17 coordinates ATP. Aspartate 19 contacts Mg(2+). Glutamate 45 is a K(+) binding site. Residues glutamate 58 and glutamine 101 each contribute to the L-methionine site. A flexible loop region spans residues 101 to 111 (QSPDIGQGVDV). Residues 160–162 (DGK), 226–227 (RF), aspartate 235, 241–242 (RK), alanine 258, and lysine 262 each bind ATP. Residue aspartate 235 participates in L-methionine binding. L-methionine is bound at residue lysine 266.

Belongs to the AdoMet synthase family. As to quaternary structure, homotetramer; dimer of dimers. The cofactor is Mg(2+). K(+) serves as cofactor.

The protein resides in the cytoplasm. It catalyses the reaction L-methionine + ATP + H2O = S-adenosyl-L-methionine + phosphate + diphosphate. The protein operates within amino-acid biosynthesis; S-adenosyl-L-methionine biosynthesis; S-adenosyl-L-methionine from L-methionine: step 1/1. Its function is as follows. Catalyzes the formation of S-adenosylmethionine (AdoMet) from methionine and ATP. The overall synthetic reaction is composed of two sequential steps, AdoMet formation and the subsequent tripolyphosphate hydrolysis which occurs prior to release of AdoMet from the enzyme. In Anaeromyxobacter sp. (strain Fw109-5), this protein is S-adenosylmethionine synthase.